A 296-amino-acid polypeptide reads, in one-letter code: Bifunctional protein FolD (296 aa).

Residues 166 to 168, Ser195, and Thr236 each bind NADP(+); that span reads GRS.

This sequence belongs to the tetrahydrofolate dehydrogenase/cyclohydrolase family. Homodimer.

It catalyses the reaction (6R)-5,10-methylene-5,6,7,8-tetrahydrofolate + NADP(+) = (6R)-5,10-methenyltetrahydrofolate + NADPH. It carries out the reaction (6R)-5,10-methenyltetrahydrofolate + H2O = (6R)-10-formyltetrahydrofolate + H(+). The protein operates within one-carbon metabolism; tetrahydrofolate interconversion. In terms of biological role, catalyzes the oxidation of 5,10-methylenetetrahydrofolate to 5,10-methenyltetrahydrofolate and then the hydrolysis of 5,10-methenyltetrahydrofolate to 10-formyltetrahydrofolate. In Dehalococcoides mccartyi (strain ATCC BAA-2266 / KCTC 15142 / 195) (Dehalococcoides ethenogenes (strain 195)), this protein is Bifunctional protein FolD.